The following is an 860-amino-acid chain: Leucine--tRNA ligase (860 aa).

The 'HIGH' region motif lies at 42 to 52 (PYPSGRLHMGH). Positions 619 to 623 (KMSKS) match the 'KMSKS' region motif. Lysine 622 is a binding site for ATP.

Belongs to the class-I aminoacyl-tRNA synthetase family.

It is found in the cytoplasm. The enzyme catalyses tRNA(Leu) + L-leucine + ATP = L-leucyl-tRNA(Leu) + AMP + diphosphate. In Yersinia pseudotuberculosis serotype O:3 (strain YPIII), this protein is Leucine--tRNA ligase.